Here is a 79-residue protein sequence, read N- to C-terminus: Acyl carrier protein (79 aa).

The 76-residue stretch at 2 to 77 folds into the Carrier domain; sequence SDIEARVKKI…LAIDYAKSHA (76 aa). Serine 37 is modified (O-(pantetheine 4'-phosphoryl)serine).

Belongs to the acyl carrier protein (ACP) family. In terms of processing, 4'-phosphopantetheine is transferred from CoA to a specific serine of apo-ACP by AcpS. This modification is essential for activity because fatty acids are bound in thioester linkage to the sulfhydryl of the prosthetic group.

Its subcellular location is the cytoplasm. It participates in lipid metabolism; fatty acid biosynthesis. Its function is as follows. Carrier of the growing fatty acid chain in fatty acid biosynthesis. The chain is Acyl carrier protein from Methylibium petroleiphilum (strain ATCC BAA-1232 / LMG 22953 / PM1).